Consider the following 498-residue polypeptide: 3-octaprenyl-4-hydroxybenzoate carboxy-lyase (498 aa).

A Mn(2+)-binding site is contributed by asparagine 175. Residues 178–180 (IYR), 192–194 (RWL), and 197–198 (RG) contribute to the prenylated FMN site. Residue glutamate 241 participates in Mn(2+) binding. Aspartate 290 serves as the catalytic Proton donor.

This sequence belongs to the UbiD family. As to quaternary structure, homohexamer. It depends on prenylated FMN as a cofactor. Requires Mn(2+) as cofactor.

The protein localises to the cell membrane. It catalyses the reaction a 4-hydroxy-3-(all-trans-polyprenyl)benzoate + H(+) = a 2-(all-trans-polyprenyl)phenol + CO2. The protein operates within cofactor biosynthesis; ubiquinone biosynthesis. In terms of biological role, catalyzes the decarboxylation of 3-octaprenyl-4-hydroxy benzoate to 2-octaprenylphenol, an intermediate step in ubiquinone biosynthesis. This Yersinia pseudotuberculosis serotype I (strain IP32953) protein is 3-octaprenyl-4-hydroxybenzoate carboxy-lyase.